A 216-amino-acid chain; its full sequence is 3-isopropylmalate dehydratase small subunit 2 (216 aa).

The protein belongs to the LeuD family. LeuD type 1 subfamily. As to quaternary structure, heterodimer of LeuC and LeuD.

The enzyme catalyses (2R,3S)-3-isopropylmalate = (2S)-2-isopropylmalate. The protein operates within amino-acid biosynthesis; L-leucine biosynthesis; L-leucine from 3-methyl-2-oxobutanoate: step 2/4. Its function is as follows. Catalyzes the isomerization between 2-isopropylmalate and 3-isopropylmalate, via the formation of 2-isopropylmaleate. This Bordetella pertussis (strain Tohama I / ATCC BAA-589 / NCTC 13251) protein is 3-isopropylmalate dehydratase small subunit 2.